The following is a 138-amino-acid chain: Nucleoside diphosphate kinase (138 aa).

ATP is bound by residues K9, F57, R85, T91, R102, and N112. H120 serves as the catalytic Pros-phosphohistidine intermediate.

It belongs to the NDK family. As to quaternary structure, homotetramer. Mg(2+) serves as cofactor.

It is found in the cytoplasm. The enzyme catalyses a 2'-deoxyribonucleoside 5'-diphosphate + ATP = a 2'-deoxyribonucleoside 5'-triphosphate + ADP. It carries out the reaction a ribonucleoside 5'-diphosphate + ATP = a ribonucleoside 5'-triphosphate + ADP. Functionally, major role in the synthesis of nucleoside triphosphates other than ATP. The ATP gamma phosphate is transferred to the NDP beta phosphate via a ping-pong mechanism, using a phosphorylated active-site intermediate. The protein is Nucleoside diphosphate kinase of Streptococcus agalactiae serotype V (strain ATCC BAA-611 / 2603 V/R).